Here is a 298-residue protein sequence, read N- to C-terminus: Thymidylate synthase (298 aa).

DUMP is bound by residues Arg-25 and 159–160; that span reads RR. Residue Cys-179 is the Nucleophile of the active site. DUMP-binding positions include 200 to 203, Asn-211, and 241 to 243; these read RSVD and HLY. Asp-203 lines the (6R)-5,10-methylene-5,6,7,8-tetrahydrofolate pocket. Ala-297 contributes to the (6R)-5,10-methylene-5,6,7,8-tetrahydrofolate binding site.

This sequence belongs to the thymidylate synthase family. Bacterial-type ThyA subfamily. As to quaternary structure, homodimer.

The protein localises to the cytoplasm. The enzyme catalyses dUMP + (6R)-5,10-methylene-5,6,7,8-tetrahydrofolate = 7,8-dihydrofolate + dTMP. The protein operates within pyrimidine metabolism; dTTP biosynthesis. Catalyzes the reductive methylation of 2'-deoxyuridine-5'-monophosphate (dUMP) to 2'-deoxythymidine-5'-monophosphate (dTMP) while utilizing 5,10-methylenetetrahydrofolate (mTHF) as the methyl donor and reductant in the reaction, yielding dihydrofolate (DHF) as a by-product. This enzymatic reaction provides an intracellular de novo source of dTMP, an essential precursor for DNA biosynthesis. The polypeptide is Thymidylate synthase (Cereibacter sphaeroides (strain ATCC 17029 / ATH 2.4.9) (Rhodobacter sphaeroides)).